Here is a 264-residue protein sequence, read N- to C-terminus: Taurine import ATP-binding protein TauB (264 aa).

An ABC transporter domain is found at Leu-4–Ala-233. Gly-38 to Thr-45 provides a ligand contact to ATP.

This sequence belongs to the ABC transporter superfamily. Taurine importer (TC 3.A.1.17.1) family. The complex is composed of two ATP-binding proteins (TauB), two transmembrane proteins (TauC) and a solute-binding protein (TauA).

It localises to the cell inner membrane. It carries out the reaction taurine(out) + ATP + H2O = taurine(in) + ADP + phosphate + H(+). Its function is as follows. Part of the ABC transporter complex TauABC involved in taurine import. Responsible for energy coupling to the transport system. This chain is Taurine import ATP-binding protein TauB, found in Pseudomonas fluorescens (strain ATCC BAA-477 / NRRL B-23932 / Pf-5).